A 283-amino-acid polypeptide reads, in one-letter code: Zinc finger protein 691 (283 aa).

The span at 1–41 (MGSEKEQRPEAHLPEEGEGAKPWRVDGSKDSQITPREDHGQ) shows a compositional bias: basic and acidic residues. The segment at 1–68 (MGSEKEQRPE…KVTAQAGGPG (68 aa)) is disordered. S43 carries the phosphoserine modification. A Glycyl lysine isopeptide (Lys-Gly) (interchain with G-Cter in SUMO2) cross-link involves residue K81. C2H2-type zinc fingers lie at residues 83–105 (FICAQCGKTFNNTSNLRTHQRIH), 111–133 (YKCSECGKSFSRSSNRIRHERIH), 139–161 (YQCAKCQESFRRRSDLTTHQQDH), 167–189 (YRCDICGKSFTQSSTLAVHHRTH), 195–217 (YICCECGKSFSNSSSFGVHHRTH), 223–245 (YECTECGRTFSDISNFGAHQRTH), and 251–273 (YRCTLCGKHFSRSSNLIRHQKTH).

It belongs to the krueppel C2H2-type zinc-finger protein family.

Its subcellular location is the nucleus. Functionally, may be involved in transcriptional regulation. In Mus musculus (Mouse), this protein is Zinc finger protein 691 (Znf691).